A 243-amino-acid chain; its full sequence is MNLIIDIGNTVAKVALFDRTSMVEVVYDSNQSLDSLEAVCNKYDVRKAIVATVIDLNECVLAQLNKLPVPVLWLDSHTSLPVINLYETPETLGYDRMAAVVAAHDQFPGKDILVIDAGTCITYEFVDSLGQYHGGNISPGLWMRLKALHQFTGRLPLVHAEGRMPDMGKDTETAIRAGVKKGIEYEITGYITAMKHKYPELLVFLTGGDDFSFDTKLKSVIFADRFLVLKGLNRILNYNNGRI.

Residue 6-13 (DIGNTVAK) participates in ATP binding. Substrate contacts are provided by residues Y86 and 93 to 96 (GYDR). Catalysis depends on D95, which acts as the Proton acceptor. D116 lines the K(+) pocket. T119 is an ATP binding site. T171 provides a ligand contact to substrate.

Belongs to the type III pantothenate kinase family. In terms of assembly, homodimer. It depends on NH4(+) as a cofactor. Requires K(+) as cofactor.

The protein localises to the cytoplasm. The catalysed reaction is (R)-pantothenate + ATP = (R)-4'-phosphopantothenate + ADP + H(+). Its pathway is cofactor biosynthesis; coenzyme A biosynthesis; CoA from (R)-pantothenate: step 1/5. Catalyzes the phosphorylation of pantothenate (Pan), the first step in CoA biosynthesis. The chain is Type III pantothenate kinase from Bacteroides fragilis (strain YCH46).